A 322-amino-acid chain; its full sequence is Methionyl-tRNA formyltransferase (322 aa).

Position 112-115 (112-115) interacts with (6S)-5,6,7,8-tetrahydrofolate; the sequence is SLLP.

Belongs to the Fmt family.

The catalysed reaction is L-methionyl-tRNA(fMet) + (6R)-10-formyltetrahydrofolate = N-formyl-L-methionyl-tRNA(fMet) + (6S)-5,6,7,8-tetrahydrofolate + H(+). In terms of biological role, attaches a formyl group to the free amino group of methionyl-tRNA(fMet). The formyl group appears to play a dual role in the initiator identity of N-formylmethionyl-tRNA by promoting its recognition by IF2 and preventing the misappropriation of this tRNA by the elongation apparatus. The chain is Methionyl-tRNA formyltransferase from Synechococcus sp. (strain JA-3-3Ab) (Cyanobacteria bacterium Yellowstone A-Prime).